The primary structure comprises 94 residues: (2R)-sulfolactate sulfo-lyase subunit alpha (94 aa).

Residues 16–90 (VVVVEGVEAG…GEHVHVHNVK (75 aa)) form the AFP-like domain.

(2R)-sulfolactate sulfo-lyase is composed of a SuyA and a SuyB subunit.

It is found in the cytoplasm. The enzyme catalyses (2R)-3-sulfolactate = sulfite + pyruvate + H(+). Together with SuyB, desulfonates sulfolactate to pyruvate and sulfite. The polypeptide is (2R)-sulfolactate sulfo-lyase subunit alpha (suyA) (Chromohalobacter salexigens (strain ATCC BAA-138 / DSM 3043 / CIP 106854 / NCIMB 13768 / 1H11)).